We begin with the raw amino-acid sequence, 536 residues long: Interferon alpha/beta receptor 2 (536 aa).

Residues 1–26 (MLLSQNVSAIGPLNLYPMVHISLVFG) form the signal peptide. The Extracellular portion of the chain corresponds to 27 to 246 (ISYVVPDLSD…RESESSEPAT (220 aa)). 2 disulfides stabilise this stretch: cysteine 39–cysteine 122 and cysteine 85–cysteine 93. Asparagine 58, asparagine 87, asparagine 101, asparagine 147, and asparagine 191 each carry an N-linked (GlcNAc...) asparagine glycan. Residues cysteine 210 and cysteine 230 are joined by a disulfide bond. A helical transmembrane segment spans residues 247–267 (IGGILILFLLAAVCISTVMIL). The Cytoplasmic portion of the chain corresponds to 268-536 (KRIGYICLRN…VRQVNLKNFN (269 aa)). Phosphotyrosine is present on tyrosine 340. 3 consecutive repeat copies span residues 358 to 362 (SLEDC), 363 to 367 (SLEDC), and 368 to 372 (SLEDC). Residues 358 to 372 (SLEDCSLEDCSLEDC) form a 3 X 5 AA tandem repeats of S-L-E-D-C region. Residues 369–434 (LEDCSDPSAE…SDSTEGSEGR (66 aa)) form a disordered region. Positions 420–429 (TSEEDSDSTE) are enriched in acidic residues. Residues 432–456 (EGRIVFNVNLNSVCVRALEDDKDSE) are mediates interaction with STAT2 (and required for the recruitment of USP18). Phosphoserine is present on serine 480. Positions 487 to 522 (EEGTQLPFTDPSMECLRPQDALSDKSDTSESDVDIG) are disordered. Tyrosine 525 carries the post-translational modification Phosphotyrosine.

This sequence belongs to the type II cytokine receptor family. As to quaternary structure, heterodimer with IFNAR1; forming the receptor for type I interferon. Interacts with the transcriptional factors STAT1 and STAT2. Interacts with JAK1. Interacts with USP18; indirectly via STAT2, it negatively regulates the assembly of the ternary interferon-IFNAR1-IFNAR2 complex and therefore type I interferon signaling. Phosphorylated on tyrosine residues upon interferon binding. Phosphorylation at Tyr-340 or Tyr-525 are sufficient to mediate interferon dependent activation of STAT1, STAT2 and STAT3 leading to antiproliferative effects on many different cell types. As to expression, expressed in the endometrium. Expressed in all tissues examined except conceptus at day 15 of pregnancy.

The protein resides in the cell membrane. Functionally, together with IFNAR1, forms the heterodimeric receptor for type I interferons (including interferons alpha, beta, epsilon, omega and kappa). Type I interferon binding activates the JAK-STAT signaling cascade, resulting in transcriptional activation or repression of interferon-regulated genes that encode the effectors of the interferon response. Mechanistically, type I interferon-binding brings the IFNAR1 and IFNAR2 subunits into close proximity with one another, driving their associated Janus kinases (JAKs) (TYK2 bound to IFNAR1 and JAK1 bound to IFNAR2) to cross-phosphorylate one another. The activated kinases phosphorylate specific tyrosine residues on the intracellular domains of IFNAR1 and IFNAR2, forming docking sites for the STAT transcription factors (STAT1, STAT2 and STAT). STAT proteins are then phosphorylated by the JAKs, promoting their translocation into the nucleus to regulate expression of interferon-regulated genes. The sequence is that of Interferon alpha/beta receptor 2 (IFNAR2) from Ovis aries (Sheep).